Reading from the N-terminus, the 274-residue chain is NAD(P)H dehydrogenase [quinone] 1 (274 aa).

Alanine 2 is modified (N-acetylalanine). FAD contacts are provided by residues histidine 12, phenylalanine 18 to asparagine 19, and glutamine 67. Serine 82 is modified (phosphoserine). Leucine 104–phenylalanine 107 provides a ligand contact to FAD. Alanine 126–threonine 128 provides a ligand contact to substrate. Residues threonine 148–glycine 151, tyrosine 156, and arginine 201 each bind FAD. Positions proline 225–lysine 274 are important for apoenzyme conformational stability. Lysine 251 is covalently cross-linked (Glycyl lysine isopeptide (Lys-Gly) (interchain with G-Cter in SUMO2)).

It belongs to the NAD(P)H dehydrogenase (quinone) family. In terms of assembly, homodimer. Interacts with PDLIM4 isoform 2; this interaction stabilizes PDLIM4 isoform 2 in response to oxidative stress and protects it from ubiquitin-independent degradation by the core 20S proteasome. Interacts with TP73 (via SAM domain); this interaction is NADH-dependent, stabilizes TP73 in response to oxidative stress and protects it from ubiquitin-independent degradation by the 20S proteasome. Interacts with TP53; this interaction is NADH-dependent, stabilizes TP53 in response to oxidative stress and protects it from ubiquitin-independent degradation by the 20S proteasome. It depends on FAD as a cofactor.

It is found in the cytoplasm. Its subcellular location is the cytosol. The enzyme catalyses a quinone + NADH + H(+) = a quinol + NAD(+). It carries out the reaction a quinone + NADPH + H(+) = a quinol + NADP(+). The catalysed reaction is ubiquinone-10 + NADH + H(+) = ubiquinol-10 + NAD(+). It catalyses the reaction menadione + NADH + H(+) = menadiol + NAD(+). Functionally, flavin-containing quinone reductase that catalyzes two-electron reduction of quinones to hydroquinones using either NADH or NADPH as electron donors. In a ping-pong kinetic mechanism, the electrons are sequentially transferred from NAD(P)H to flavin cofactor and then from reduced flavin to the quinone, bypassing the formation of semiquinone and reactive oxygen species. Regulates cellular redox state primarily through quinone detoxification. Reduces components of plasma membrane redox system such as coenzyme Q and vitamin quinones, producing antioxidant hydroquinone forms. In the process may function as superoxide scavenger to prevent hydroquinone oxidation and facilitate excretion. Alternatively, can activate quinones and their derivatives by generating redox reactive hydroquinones with DNA cross-linking antitumor potential. Acts as a gatekeeper of the core 20S proteasome known to degrade proteins with unstructured regions. Upon oxidative stress, interacts with tumor suppressors TP53 and TP73 in a NADH-dependent way and inhibits their ubiquitin-independent degradation by the 20S proteasome. The protein is NAD(P)H dehydrogenase [quinone] 1 (Nqo1) of Rattus norvegicus (Rat).